Here is a 515-residue protein sequence, read N- to C-terminus: Bifunctional purine biosynthesis protein PurH (515 aa).

Residues 1-145 (MTKRALISVS…KNHASVTVVV (145 aa)) enclose the MGS-like domain.

Belongs to the PurH family.

It catalyses the reaction (6R)-10-formyltetrahydrofolate + 5-amino-1-(5-phospho-beta-D-ribosyl)imidazole-4-carboxamide = 5-formamido-1-(5-phospho-D-ribosyl)imidazole-4-carboxamide + (6S)-5,6,7,8-tetrahydrofolate. The catalysed reaction is IMP + H2O = 5-formamido-1-(5-phospho-D-ribosyl)imidazole-4-carboxamide. Its pathway is purine metabolism; IMP biosynthesis via de novo pathway; 5-formamido-1-(5-phospho-D-ribosyl)imidazole-4-carboxamide from 5-amino-1-(5-phospho-D-ribosyl)imidazole-4-carboxamide (10-formyl THF route): step 1/1. It participates in purine metabolism; IMP biosynthesis via de novo pathway; IMP from 5-formamido-1-(5-phospho-D-ribosyl)imidazole-4-carboxamide: step 1/1. This is Bifunctional purine biosynthesis protein PurH from Streptococcus pyogenes serotype M2 (strain MGAS10270).